Reading from the N-terminus, the 185-residue chain is Peptide deformylase (185 aa).

Cys94 and His136 together coordinate Fe cation. The active site involves Glu137. His140 serves as a coordination point for Fe cation.

This sequence belongs to the polypeptide deformylase family. It depends on Fe(2+) as a cofactor.

It catalyses the reaction N-terminal N-formyl-L-methionyl-[peptide] + H2O = N-terminal L-methionyl-[peptide] + formate. Removes the formyl group from the N-terminal Met of newly synthesized proteins. Requires at least a dipeptide for an efficient rate of reaction. N-terminal L-methionine is a prerequisite for activity but the enzyme has broad specificity at other positions. The sequence is that of Peptide deformylase from Chlorobium limicola (strain DSM 245 / NBRC 103803 / 6330).